Reading from the N-terminus, the 331-residue chain is Mitochondrial carrier protein CoAc1 (331 aa).

Helical transmembrane passes span 16 to 36 (LVDT…AGAI), 79 to 99 (FYKG…LHYM), 123 to 143 (LVAG…LDLA), 193 to 213 (GIGP…YIYE), 231 to 251 (LPCG…LDVV), and 292 to 312 (FAGL…GFTV). Solcar repeat units follow at residues 21-107 (PVLA…YRDW), 117-218 (SGPI…LKRH), and 225-319 (NSVR…MKSW).

Belongs to the mitochondrial carrier (TC 2.A.29) family. Expressed throughout the plant.

It is found in the mitochondrion inner membrane. Its function is as follows. Required for the accumulation of coenzyme A in the mitochondrial matrix. The chain is Mitochondrial carrier protein CoAc1 from Arabidopsis thaliana (Mouse-ear cress).